The chain runs to 206 residues: Large ribosomal subunit protein uL4 (206 aa).

Residues 44–78 are disordered; the sequence is RSGNRAQKDREQVKHTTKKPWRQKGTGRARAGMSS. Basic residues predominate over residues 58–70; the sequence is HTTKKPWRQKGTG.

Belongs to the universal ribosomal protein uL4 family. As to quaternary structure, part of the 50S ribosomal subunit.

In terms of biological role, one of the primary rRNA binding proteins, this protein initially binds near the 5'-end of the 23S rRNA. It is important during the early stages of 50S assembly. It makes multiple contacts with different domains of the 23S rRNA in the assembled 50S subunit and ribosome. Forms part of the polypeptide exit tunnel. The polypeptide is Large ribosomal subunit protein uL4 (Paraburkholderia phytofirmans (strain DSM 17436 / LMG 22146 / PsJN) (Burkholderia phytofirmans)).